We begin with the raw amino-acid sequence, 1569 residues long: Pentafunctional AROM polypeptide (1569 aa).

Positions 1-382 (MAEAKKPGPE…HEPRASVVDD (382 aa)) are 3-dehydroquinate synthase. Residues 49–51 (DTN), 84–87 (EASK), 115–117 (GGV), and D120 each bind NAD(+). R131 is a binding site for 7-phospho-2-dehydro-3-deoxy-D-arabino-heptonate. Position 140 to 141 (140 to 141 (TT)) interacts with NAD(+). Residues D147 and K153 each contribute to the 7-phospho-2-dehydro-3-deoxy-D-arabino-heptonate site. K162 is an NAD(+) binding site. A 7-phospho-2-dehydro-3-deoxy-D-arabino-heptonate-binding site is contributed by N163. NAD(+) contacts are provided by residues 180-183 (FLET) and N191. E195 provides a ligand contact to Zn(2+). Residues 195 to 198 (EVVK) and K248 each bind 7-phospho-2-dehydro-3-deoxy-D-arabino-heptonate. E258 serves as the catalytic Proton acceptor; for 3-dehydroquinate synthase activity. Residues 262–266 (RNLLN) and H269 each bind 7-phospho-2-dehydro-3-deoxy-D-arabino-heptonate. H269 contacts Zn(2+). The active-site Proton acceptor; for 3-dehydroquinate synthase activity is H273. 7-phospho-2-dehydro-3-deoxy-D-arabino-heptonate-binding residues include H285 and K354. H285 is a binding site for Zn(2+). The segment at 395–837 (VTPGVPSNLD…WDILSQAFKV (443 aa)) is EPSP synthase. C819 functions as the For EPSP synthase activity in the catalytic mechanism. The segment at 859-1053 (ERSVFIIGMR…MEKDHSFFVS (195 aa)) is shikimate kinase. 866–873 (GMRGAGKT) lines the ATP pocket. Positions 1054 to 1267 (LTVPDVSEAA…AAPGQMSAAE (214 aa)) are 3-dehydroquinase. The Proton acceptor; for 3-dehydroquinate dehydratase activity role is filled by H1170. K1198 (schiff-base intermediate with substrate; for 3-dehydroquinate dehydratase activity) is an active-site residue. A shikimate dehydrogenase region spans residues 1280–1569 (PCNFYLFGKP…RDARSAVLGL (290 aa)).

In the N-terminal section; belongs to the sugar phosphate cyclases superfamily. Dehydroquinate synthase family. This sequence in the 2nd section; belongs to the EPSP synthase family. It in the 3rd section; belongs to the shikimate kinase family. The protein in the 4th section; belongs to the type-I 3-dehydroquinase family. In the C-terminal section; belongs to the shikimate dehydrogenase family. Homodimer. Requires Zn(2+) as cofactor.

The protein localises to the cytoplasm. It catalyses the reaction 7-phospho-2-dehydro-3-deoxy-D-arabino-heptonate = 3-dehydroquinate + phosphate. The enzyme catalyses 3-dehydroquinate = 3-dehydroshikimate + H2O. It carries out the reaction shikimate + NADP(+) = 3-dehydroshikimate + NADPH + H(+). The catalysed reaction is shikimate + ATP = 3-phosphoshikimate + ADP + H(+). It catalyses the reaction 3-phosphoshikimate + phosphoenolpyruvate = 5-O-(1-carboxyvinyl)-3-phosphoshikimate + phosphate. The protein operates within metabolic intermediate biosynthesis; chorismate biosynthesis; chorismate from D-erythrose 4-phosphate and phosphoenolpyruvate: step 2/7. It functions in the pathway metabolic intermediate biosynthesis; chorismate biosynthesis; chorismate from D-erythrose 4-phosphate and phosphoenolpyruvate: step 3/7. Its pathway is metabolic intermediate biosynthesis; chorismate biosynthesis; chorismate from D-erythrose 4-phosphate and phosphoenolpyruvate: step 4/7. It participates in metabolic intermediate biosynthesis; chorismate biosynthesis; chorismate from D-erythrose 4-phosphate and phosphoenolpyruvate: step 5/7. The protein operates within metabolic intermediate biosynthesis; chorismate biosynthesis; chorismate from D-erythrose 4-phosphate and phosphoenolpyruvate: step 6/7. Functionally, the AROM polypeptide catalyzes 5 consecutive enzymatic reactions in prechorismate polyaromatic amino acid biosynthesis. The protein is Pentafunctional AROM polypeptide of Fusarium vanettenii (strain ATCC MYA-4622 / CBS 123669 / FGSC 9596 / NRRL 45880 / 77-13-4) (Fusarium solani subsp. pisi).